The chain runs to 325 residues: MQDTYQREINYLRISVTDRCNLRCVYCMPEEGVRSLPHGEILRLEEIETVVRAAALTGVKKIRLTGGEPLVRKGLEELVRRVSGIPGIDDIALTTNGLLLPSRAKALKEAGVKRVNVSLDTLRADRYAEITRGGNLAGAWEGIQSALDAGLHPVKLNTVIIRGFNEDEVVAMAMLTINRPLHVRFIELMPIGSSSSWAAGRYVPAAEVMDAISAKLGPLVPARQPAGGGPAKYYRLKDAAGTVGFITSMSEHFCHRCNRLRLTASGGLRPCLYDGREIDLKAPLREGAGTREIAALIMEAIALKPDRHHMLEGWRDRRQMSQIGG.

The Radical SAM core domain maps to 4–219; that stretch reads TYQREINYLR…DAISAKLGPL (216 aa). Position 13 (arginine 13) interacts with GTP. Residues cysteine 20 and cysteine 24 each coordinate [4Fe-4S] cluster. Residue tyrosine 26 coordinates S-adenosyl-L-methionine. Residue cysteine 27 coordinates [4Fe-4S] cluster. Arginine 63 is a GTP binding site. Residue glycine 67 coordinates S-adenosyl-L-methionine. Threonine 94 is a binding site for GTP. An S-adenosyl-L-methionine-binding site is contributed by serine 118. Lysine 155 contacts GTP. Methionine 189 contacts S-adenosyl-L-methionine. Positions 254 and 257 each coordinate [4Fe-4S] cluster. Residue 259–261 participates in GTP binding; it reads RLR. Cysteine 271 contributes to the [4Fe-4S] cluster binding site.

The protein belongs to the radical SAM superfamily. MoaA family. In terms of assembly, monomer and homodimer. [4Fe-4S] cluster serves as cofactor.

It carries out the reaction GTP + AH2 + S-adenosyl-L-methionine = (8S)-3',8-cyclo-7,8-dihydroguanosine 5'-triphosphate + 5'-deoxyadenosine + L-methionine + A + H(+). It participates in cofactor biosynthesis; molybdopterin biosynthesis. Catalyzes the cyclization of GTP to (8S)-3',8-cyclo-7,8-dihydroguanosine 5'-triphosphate. In Pelotomaculum thermopropionicum (strain DSM 13744 / JCM 10971 / SI), this protein is GTP 3',8-cyclase.